The chain runs to 357 residues: Low-salt glycan biosynthesis nucleotidyltransferase Agl11 (357 aa).

D108 and D221 together coordinate Mg(2+).

It belongs to the glucose-1-phosphate thymidylyltransferase family. It depends on Mg(2+) as a cofactor.

It participates in protein modification; protein glycosylation. Its pathway is cell surface structure biogenesis; S-layer biogenesis. Its function is as follows. Nucleotidyltransferase involved in N-glycan biosynthetic pathway that takes place under low-salt conditions (1.75 M instead of 3.4 M). Participates in the formation of the tetrasaccharide present at 'Asn-532' of S-layer glycoprotein Csg, consisting of a sulfated hexose, 2 hexoses and rhamnose. Involved in the addition of final rhamnose (sugar 4) of the tetrasaccharide on the dolichol phosphate carrier. The sequence is that of Low-salt glycan biosynthesis nucleotidyltransferase Agl11 (agl11) from Haloferax volcanii (strain ATCC 29605 / DSM 3757 / JCM 8879 / NBRC 14742 / NCIMB 2012 / VKM B-1768 / DS2) (Halobacterium volcanii).